Reading from the N-terminus, the 105-residue chain is Large ribosomal subunit protein uL24 (105 aa).

It belongs to the universal ribosomal protein uL24 family. In terms of assembly, part of the 50S ribosomal subunit.

In terms of biological role, one of two assembly initiator proteins, it binds directly to the 5'-end of the 23S rRNA, where it nucleates assembly of the 50S subunit. Its function is as follows. One of the proteins that surrounds the polypeptide exit tunnel on the outside of the subunit. The polypeptide is Large ribosomal subunit protein uL24 (Vibrio parahaemolyticus serotype O3:K6 (strain RIMD 2210633)).